A 91-amino-acid polypeptide reads, in one-letter code: uncharacterized protein (91 aa).

The next 3 membrane-spanning stretches (helical) occupy residues 4 to 21, 28 to 50, and 60 to 82; these read YAII…LRRG, IIEV…SHAV, and VKAF…GTYL.

The protein resides in the cell membrane. This is an uncharacterized protein from Archaeoglobus fulgidus (strain ATCC 49558 / DSM 4304 / JCM 9628 / NBRC 100126 / VC-16).